The sequence spans 248 residues: Serine/arginine-rich splicing factor 1 (248 aa).

Ser-2 carries the post-translational modification N-acetylserine. Ser-2 carries the phosphoserine modification. The 76-residue stretch at 16–91 (CRIYVGNLPP…YRLRVEFPRS (76 aa)) folds into the RRM 1 domain. Residue Lys-30 forms a Glycyl lysine isopeptide (Lys-Gly) (interchain with G-Cter in SUMO2) linkage. Lys-38 is modified (N6-acetyllysine; alternate). A Glycyl lysine isopeptide (Lys-Gly) (interchain with G-Cter in SUMO2); alternate cross-link involves residue Lys-38. Residues 88-134 (FPRSGRGTGRGGGGGGGGGAPRGRYGPPSRRSENRVVVSGLPPSGSW) are disordered. Arg-93, Arg-97, and Arg-109 each carry asymmetric dimethylarginine; alternate. An omega-N-methylarginine; alternate mark is found at Arg-93, Arg-97, and Arg-109. A compositionally biased stretch (gly residues) spans 93 to 108 (RGTGRGGGGGGGGGAP). The residue at position 111 (Arg-111) is an Omega-N-methylarginine. The RRM 2 domain occupies 121-195 (NRVVVSGLPP…ETAYIRVKVD (75 aa)). Ser-133 carries the post-translational modification Phosphoserine. Position 179 is an N6-acetyllysine (Lys-179). The interval 191 to 248 (RVKVDGPRSPSYGRSRSRSRSRSRNRSRSNSRSRSYSPRRSRGSPRYSPRHSRSRSRT) is disordered. The tract at residues 198-247 (RSPSYGRSRSRSRSRSRNRSRSNSRSRSYSPRRSRGSPRYSPRHSRSRSR) is interaction with SAFB1. Ser-199 and Ser-201 each carry phosphoserine. The residue at position 202 (Tyr-202) is a Phosphotyrosine. A phosphoserine mark is found at Ser-205, Ser-207, Ser-209, Ser-231, Ser-234, and Ser-238. The segment covering 205 to 248 (SRSRSRSRSRNRSRSNSRSRSYSPRRSRGSPRYSPRHSRSRSRT) has biased composition (basic residues).

The protein belongs to the splicing factor SR family. Consists of two polypeptides of p32 and p33. Identified in the spliceosome C complex. Component of a ribonucleoprotein complex containing mRNAs and RNA-binding proteins including DDX5, HNRNPH2 and SRSF1 as well as splicing regulator ARVCF. In vitro, self-associates and binds SRSF2, SNRNP70 and U2AF1 but not U2AF2. Binds SREK1/SFRS12. Interacts with SAFB/SAFB1. Interacts with PSIP1/LEDGF. Interacts with RSRC1 (via Arg/Ser-rich domain). Interacts with ZRSR2/U2AF1-RS2. Interacts with CCDC55 (via C-terminus). Interacts with SRPK1 and a sliding docking interaction is essential for its sequential and processive phosphorylation by SRPK1. Interacts with NXF1. Interacts with CCNL1, CCNL2 and CDK11B. Interacts with RRP1B. Interacts (when phosphorylated in its RS domain) with TNPO3; promoting nuclear import. Interacts with ILDR1 (via C-terminus) and ILDR2. Post-translationally, phosphorylated by CLK1, CLK2, CLK3 and CLK4. Phosphorylated by SRPK1 at multiple serines in its RS domain via a directional (C-terminal to N-terminal) and a dual-track mechanism incorporating both processive phosphorylation (in which the kinase stays attached to the substrate after each round of phosphorylation) and distributive phosphorylation steps (in which the kinase and substrate dissociate after each phosphorylation event). The RS domain of SRSF1 binds to a docking groove in the large lobe of the kinase domain of SRPK1 and this induces certain structural changes in SRPK1 and/or RRM 2 domain of SRSF1, allowing RRM 2 to bind the kinase and initiate phosphorylation. The cycles continue for several phosphorylation steps in a processive manner (steps 1-8) until the last few phosphorylation steps (approximately steps 9-12). During that time, a mechanical stress induces the unfolding of the beta-4 motif in RRM 2, which then docks at the docking groove of SRPK1. This also signals RRM 2 to begin to dissociate, which facilitates SRSF1 dissociation after phosphorylation is completed. Asymmetrically dimethylated at arginines, probably by PRMT1, methylation promotes localization to nuclear speckles.

It localises to the cytoplasm. The protein resides in the nucleus speckle. Functionally, plays a role in preventing exon skipping, ensuring the accuracy of splicing and regulating alternative splicing. Interacts with other spliceosomal components, via the RS domains, to form a bridge between the 5'- and 3'-splice site binding components, U1 snRNP and U2AF. Can stimulate binding of U1 snRNP to a 5'-splice site-containing pre-mRNA. Binds to purine-rich RNA sequences, either the octamer, 5'-RGAAGAAC-3' (r=A or G) or the decamers, AGGACAGAGC/AGGACGAAGC. Binds preferentially to the 5'-CGAGGCG-3' motif in vitro. Three copies of the octamer constitute a powerful splicing enhancer in vitro, the ASF/SF2 splicing enhancer (ASE) which can specifically activate ASE-dependent splicing. May function as export adapter involved in mRNA nuclear export through the TAP/NXF1 pathway. In Pongo abelii (Sumatran orangutan), this protein is Serine/arginine-rich splicing factor 1 (SRSF1).